A 381-amino-acid chain; its full sequence is Cytochrome b (381 aa).

Helical transmembrane passes span 34 to 54, 78 to 99, 114 to 134, and 179 to 199; these read FGSL…FLAM, WLIR…YLHI, WNIG…GYVL, and FFAF…IHLL. Heme b is bound by residues H84 and H98. The heme b site is built by H183 and H197. H202 serves as a coordination point for a ubiquinone. 4 consecutive transmembrane segments (helical) span residues 227 to 247, 289 to 309, 321 to 341, and 348 to 368; these read YKDL…ALFT, LGGV…PLLH, LTQI…WIGG, and FIMV…IIMP.

Belongs to the cytochrome b family. In terms of assembly, the cytochrome bc1 complex contains 3 respiratory subunits (MT-CYB, CYC1 and UQCRFS1), 2 core proteins (UQCRC1 and UQCRC2) and probably 6 low-molecular weight proteins. Heme b serves as cofactor.

Its subcellular location is the mitochondrion inner membrane. Component of the ubiquinol-cytochrome c reductase complex (complex III or cytochrome b-c1 complex) that is part of the mitochondrial respiratory chain. The b-c1 complex mediates electron transfer from ubiquinol to cytochrome c. Contributes to the generation of a proton gradient across the mitochondrial membrane that is then used for ATP synthesis. The chain is Cytochrome b (mt-cyb) from Negaprion brevirostris (Lemon shark).